The chain runs to 96 residues: Co-chaperonin GroES (96 aa).

It belongs to the GroES chaperonin family. In terms of assembly, heptamer of 7 subunits arranged in a ring. Interacts with the chaperonin GroEL.

It localises to the cytoplasm. Its function is as follows. Together with the chaperonin GroEL, plays an essential role in assisting protein folding. The GroEL-GroES system forms a nano-cage that allows encapsulation of the non-native substrate proteins and provides a physical environment optimized to promote and accelerate protein folding. GroES binds to the apical surface of the GroEL ring, thereby capping the opening of the GroEL channel. The protein is Co-chaperonin GroES of Holospora obtusa.